Consider the following 153-residue polypeptide: Large ribosomal subunit protein uL13 (153 aa).

It belongs to the universal ribosomal protein uL13 family. As to quaternary structure, part of the 50S ribosomal subunit.

In terms of biological role, this protein is one of the early assembly proteins of the 50S ribosomal subunit, although it is not seen to bind rRNA by itself. It is important during the early stages of 50S assembly. The sequence is that of Large ribosomal subunit protein uL13 from Methylobacterium nodulans (strain LMG 21967 / CNCM I-2342 / ORS 2060).